The following is a 102-amino-acid chain: Small ribosomal subunit protein uS10 (102 aa).

This sequence belongs to the universal ribosomal protein uS10 family. As to quaternary structure, part of the 30S ribosomal subunit.

Its function is as follows. Involved in the binding of tRNA to the ribosomes. The chain is Small ribosomal subunit protein uS10 from Leifsonia xyli subsp. xyli (strain CTCB07).